We begin with the raw amino-acid sequence, 478 residues long: Adenosylhomocysteinase (478 aa).

Substrate-binding residues include T57, D139, and E201. 202–204 contacts NAD(+); it reads TTT. Substrate contacts are provided by K231 and D235. NAD(+) contacts are provided by residues N236, 265–270, E288, N323, 344–346, and N392; these read GYGDVG and IGH.

It belongs to the adenosylhomocysteinase family. Requires NAD(+) as cofactor.

It localises to the cytoplasm. It carries out the reaction S-adenosyl-L-homocysteine + H2O = L-homocysteine + adenosine. It participates in amino-acid biosynthesis; L-homocysteine biosynthesis; L-homocysteine from S-adenosyl-L-homocysteine: step 1/1. Its function is as follows. May play a key role in the regulation of the intracellular concentration of adenosylhomocysteine. The polypeptide is Adenosylhomocysteinase (Corynebacterium glutamicum (strain R)).